We begin with the raw amino-acid sequence, 356 residues long: MAIVSSITNHSSLPNDKGEERLVGPSLLKEELKLSQQDSLRPKSFDDFVGQSELKKVLEISVKASLKRGEALDHLMLYGPPGLGKTTMALVIAEELGVKARVTSAPALERPRDIVGLLINIQPRELIFVDEIHRLNRISQELLYPAMEDRRLDLTVGKGTSSRMRSIEIPPFTLVGATTKPAALSSPMRDRFGITQRLDFYNYLDLENIIKRSAKLINLVISEEASQQLAKRCRGTPRIANRLIRRVRDYAEVYSHSKKIDVEVVNDALDLHRVDQRGLDATDRSYIGLLVNQYQGGPVGLETLAAGLGEDSTTLETVVEPYLMQIGFLHRTSRGRVVTPAAKKHYLLTSPNNIDK.

A compositionally biased stretch (polar residues) spans 1-14; sequence MAIVSSITNHSSLP. A disordered region spans residues 1–20; sequence MAIVSSITNHSSLPNDKGEE. Residues 13-201 form a large ATPase domain (RuvB-L) region; it reads LPNDKGEERL…FGITQRLDFY (189 aa). 9 residues coordinate ATP: L40, R41, G82, K85, T86, T87, R191, Y201, and R238. T86 contributes to the Mg(2+) binding site. The interval 202 to 273 is small ATPAse domain (RuvB-S); it reads NYLDLENIIK…VVNDALDLHR (72 aa). The segment at 276–356 is head domain (RuvB-H); sequence QRGLDATDRS…LLTSPNNIDK (81 aa). DNA contacts are provided by R331 and R336.

The protein belongs to the RuvB family. In terms of assembly, homohexamer. Forms an RuvA(8)-RuvB(12)-Holliday junction (HJ) complex. HJ DNA is sandwiched between 2 RuvA tetramers; dsDNA enters through RuvA and exits via RuvB. An RuvB hexamer assembles on each DNA strand where it exits the tetramer. Each RuvB hexamer is contacted by two RuvA subunits (via domain III) on 2 adjacent RuvB subunits; this complex drives branch migration. In the full resolvosome a probable DNA-RuvA(4)-RuvB(12)-RuvC(2) complex forms which resolves the HJ.

The protein localises to the cytoplasm. It carries out the reaction ATP + H2O = ADP + phosphate + H(+). Functionally, the RuvA-RuvB-RuvC complex processes Holliday junction (HJ) DNA during genetic recombination and DNA repair, while the RuvA-RuvB complex plays an important role in the rescue of blocked DNA replication forks via replication fork reversal (RFR). RuvA specifically binds to HJ cruciform DNA, conferring on it an open structure. The RuvB hexamer acts as an ATP-dependent pump, pulling dsDNA into and through the RuvAB complex. RuvB forms 2 homohexamers on either side of HJ DNA bound by 1 or 2 RuvA tetramers; 4 subunits per hexamer contact DNA at a time. Coordinated motions by a converter formed by DNA-disengaged RuvB subunits stimulates ATP hydrolysis and nucleotide exchange. Immobilization of the converter enables RuvB to convert the ATP-contained energy into a lever motion, pulling 2 nucleotides of DNA out of the RuvA tetramer per ATP hydrolyzed, thus driving DNA branch migration. The RuvB motors rotate together with the DNA substrate, which together with the progressing nucleotide cycle form the mechanistic basis for DNA recombination by continuous HJ branch migration. Branch migration allows RuvC to scan DNA until it finds its consensus sequence, where it cleaves and resolves cruciform DNA. This Prochlorococcus marinus (strain NATL2A) protein is Holliday junction branch migration complex subunit RuvB.